A 151-amino-acid polypeptide reads, in one-letter code: D-aminoacyl-tRNA deacylase (151 aa).

Residues 139–140 carry the Gly-cisPro motif, important for rejection of L-amino acids motif; that stretch reads GP.

Belongs to the DTD family. As to quaternary structure, homodimer.

It localises to the cytoplasm. It carries out the reaction glycyl-tRNA(Ala) + H2O = tRNA(Ala) + glycine + H(+). It catalyses the reaction a D-aminoacyl-tRNA + H2O = a tRNA + a D-alpha-amino acid + H(+). In terms of biological role, an aminoacyl-tRNA editing enzyme that deacylates mischarged D-aminoacyl-tRNAs. Also deacylates mischarged glycyl-tRNA(Ala), protecting cells against glycine mischarging by AlaRS. Acts via tRNA-based rather than protein-based catalysis; rejects L-amino acids rather than detecting D-amino acids in the active site. By recycling D-aminoacyl-tRNA to D-amino acids and free tRNA molecules, this enzyme counteracts the toxicity associated with the formation of D-aminoacyl-tRNA entities in vivo and helps enforce protein L-homochirality. The protein is D-aminoacyl-tRNA deacylase of Symbiobacterium thermophilum (strain DSM 24528 / JCM 14929 / IAM 14863 / T).